Here is a 127-residue protein sequence, read N- to C-terminus: Glycine cleavage system H protein (127 aa).

One can recognise a Lipoyl-binding domain in the interval 24–105 (TALVGITDFA…YNEGWIVKMK (82 aa)). Position 65 is an N6-lipoyllysine (K65).

It belongs to the GcvH family. As to quaternary structure, the glycine cleavage system is composed of four proteins: P, T, L and H. It depends on (R)-lipoate as a cofactor.

Its function is as follows. The glycine cleavage system catalyzes the degradation of glycine. The H protein shuttles the methylamine group of glycine from the P protein to the T protein. This Chlorobaculum tepidum (strain ATCC 49652 / DSM 12025 / NBRC 103806 / TLS) (Chlorobium tepidum) protein is Glycine cleavage system H protein.